The chain runs to 582 residues: 2-isopropylmalate synthase (582 aa).

The 275-residue stretch at 40-314 (PRWCAVDLRD…DPMIDFSDID (275 aa)) folds into the Pyruvate carboxyltransferase domain. Mg(2+)-binding residues include D49, H253, H255, and N289. The regulatory domain stretch occupies residues 456–582 (SPAGHPGGQW…NRAIRDNQVD (127 aa)).

The protein belongs to the alpha-IPM synthase/homocitrate synthase family. LeuA type 2 subfamily. As to quaternary structure, homodimer. The cofactor is Mg(2+).

Its subcellular location is the cytoplasm. The catalysed reaction is 3-methyl-2-oxobutanoate + acetyl-CoA + H2O = (2S)-2-isopropylmalate + CoA + H(+). Its pathway is amino-acid biosynthesis; L-leucine biosynthesis; L-leucine from 3-methyl-2-oxobutanoate: step 1/4. Catalyzes the condensation of the acetyl group of acetyl-CoA with 3-methyl-2-oxobutanoate (2-ketoisovalerate) to form 3-carboxy-3-hydroxy-4-methylpentanoate (2-isopropylmalate). The protein is 2-isopropylmalate synthase of Renibacterium salmoninarum (strain ATCC 33209 / DSM 20767 / JCM 11484 / NBRC 15589 / NCIMB 2235).